A 373-amino-acid polypeptide reads, in one-letter code: SH3 domain-binding protein 5-like (373 aa).

The disordered stretch occupies residues 1 to 36; the sequence is MEGKEGPPCEVRLPTPGAEREGPVHPELGAFGESAS. Coiled coils occupy residues 35-98 and 170-258; these read ASDA…ESAR and WQEM…KLRY. 2 disordered regions span residues 274–308 and 332–373; these read ARRT…PADT and DLTD…SVSL. Residues 332-360 are compositionally biased toward basic and acidic residues; that stretch reads DLTDVTSLDGRETGAVESGGSRERGEDRG.

The protein belongs to the SH3BP5 family.

Its function is as follows. Functions as a guanine nucleotide exchange factor (GEF) for rab11a. In Xenopus laevis (African clawed frog), this protein is SH3 domain-binding protein 5-like (sh3bp5l).